The sequence spans 721 residues: Xylosyl- and glucuronyltransferase LARGE2 (721 aa).

Residues 1 to 8 (MLPRGRPR) lie on the Cytoplasmic side of the membrane. A helical; Signal-anchor for type II membrane protein transmembrane segment spans residues 9–29 (ALGAAALLLLLLLLGFLLFGG). Topologically, residues 30–721 (DLGCERREPG…LQQPQSPARG (692 aa)) are lumenal. The tract at residues 59–89 (DGRLRRAAALDGDPGAGPGDHNRSDCGPQPP) is disordered. Residues asparagine 80 and asparagine 107 are each glycosylated (N-linked (GlcNAc...) asparagine). The interval 97 to 372 (LHVAIVCAGH…FLEYDGNLLR (276 aa)) is xylosyltransferase activity. Residues aspartate 201 and aspartate 203 each contribute to the Mn(2+) site. Asparagine 231 carries an N-linked (GlcNAc...) asparagine glycan. A glucuronyltransferase activity region spans residues 373–715 (RELFVCPSQP…LKYLPALQQP (343 aa)). Mn(2+) is bound by residues aspartate 521 and aspartate 523.

In the C-terminal section; belongs to the glycosyltransferase 49 family. This sequence in the N-terminal section; belongs to the glycosyltransferase 8 family. In terms of assembly, interacts with B4GAT1. Requires Mn(2+) as cofactor. In terms of tissue distribution, widely expressed. Expressed at high level in placenta, pancreas and kidney compared to LARGE. Not expressed in brain.

It localises to the golgi apparatus membrane. It catalyses the reaction 3-O-[beta-D-GlcA-(1-&gt;3)-beta-D-Xyl-(1-&gt;4)-Rib-ol-P-Rib-ol-P-3-beta-D-GalNAc-(1-&gt;3)-beta-D-GlcNAc-(1-&gt;4)-(O-6-P-alpha-D-Man)]-Thr-[protein] + UDP-alpha-D-xylose = 3-O-[alpha-D-Xyl-(1-&gt;3)-beta-D-GlcA-(1-&gt;4)-beta-D-Xyl-(1-&gt;4)-Rib-ol-P-Rib-ol-P-3-beta-D-GalNAc-(1-&gt;3)-beta-D-GlcNAc-(1-&gt;4)-(O-6-P-alpha-D-Man)]-Thr-[protein] + UDP + H(+). The catalysed reaction is 3-O-{(1-&gt;[3)-alpha-D-Xyl-(1-&gt;3)-beta-D-GlcA-(1-&gt;](n)-4)-beta-D-Xyl-(1-&gt;4)-Rib-ol-P-Rib-ol-P-3-beta-D-GalNAc-(1-&gt;3)-beta-D-GlcNAc-(1-&gt;4)-O-6-P-alpha-D-Man}-L-Thr-[protein] + UDP-alpha-D-glucuronate = 3-O-{beta-D-GlcA-(1-&gt;[3)-alpha-D-Xyl-(1-&gt;3)-beta-D-GlcA-(1-&gt;](n)-4)-beta-D-Xyl-(1-&gt;4)-Rib-ol-P-Rib-ol-P-3-beta-D-GalNAc-(1-&gt;3)-beta-D-GlcNAc-(1-&gt;4)-O-6-P-alpha-D-Man}-L-Thr-[protein] + UDP + H(+). It carries out the reaction 3-O-{beta-D-GlcA-(1-&gt;[3)-alpha-D-Xyl-(1-&gt;3)-beta-D-GlcA-(1-&gt;](n)-4)-beta-D-Xyl-(1-&gt;4)-Rib-ol-P-Rib-ol-P-3-beta-D-GalNAc-(1-&gt;3)-beta-D-GlcNAc-(1-&gt;4)-O-6-P-alpha-D-Man}-L-Thr-[protein] + UDP-alpha-D-xylose = 3-O-{(1-&gt;[3)-alpha-D-Xyl-(1-&gt;3)-beta-D-GlcA-(1-&gt;](n+1)-4)-beta-D-Xyl-(1-&gt;4)-Rib-ol-P-Rib-ol-P-3-beta-D-GalNAc-(1-&gt;3)-beta-D-GlcNAc-(1-&gt;4)-O-6-P-alpha-D-Man}-L-Thr-[protein] + UDP + H(+). Its pathway is protein modification; protein glycosylation. Its function is as follows. Bifunctional glycosyltransferase with both alpha-1,3-xylosyltransferase and beta-1,3-glucuronyltransferase activities involved in the maturation of alpha-dystroglycan (DAG1) by glycosylation leading to DAG1 binding to laminin G-like domain-containing extracellular proteins with high affinity and in a phosphorylated-O-mannosyl trisaccharide dependent manner. Elongates the glucuronyl-beta-1,4-xylose-beta disaccharide primer structure by adding repeating units [-3-Xylose-alpha-1,3-GlcA-beta-1-] to produce a heteropolysaccharide. Supports the maturation of DAG1 more effectively than LARGE1. In addition, can modify both heparan sulfate (HS)- and chondroitin/dermatan sulfate (CS/DS)-proteoglycans (PGs), namely GPC4, with a glycosaminoglycan (GAG)-like polysaccharide composed of xylose and glucuronic acid to confer laminin binding. In Homo sapiens (Human), this protein is Xylosyl- and glucuronyltransferase LARGE2.